We begin with the raw amino-acid sequence, 4555 residues long: Protocadherin Fat 3 (4555 aa).

Positions 1–31 are cleaved as a signal peptide; the sequence is MSVTMGHCMGTKPPSCIILLLLKLFATVSQG. The Extracellular segment spans residues 32-4153; it reads LPGTGPLGFH…AGHSYVGKEE (4122 aa). Cadherin domains lie at 43–157, 158–262, 263–374, 376–471, 472–577, 578–680, 726–830, 831–935, 936–1042, 1043–1147, 1148–1253, 1254–1358, 1362–1459, 1460–1565, 1566–1768, 1769–1882, 1883–1985, 1982–2083, 2084–2185, 2186–2286, 2287–2393, 2394–2495, 2496–2599, 2600–2707, 2708–2813, 2814–2923, 2924–3028, 3029–3130, 3131–3235, 3236–3340, 3341–3445, 3446–3550, and 3551–3660; these read THST…RPLF, SPTT…NEHA, PIIH…TPVR, EKDV…TPEF, QEAL…SPLF, EKVA…SKSF, KSFP…NPVF, LQDS…SPAF, IPSS…TPYF, PDFA…APLT, SEPI…RPQF, PEKV…SPIP, DEPF…GPEF, SQPH…SPYF, TNPL…PPVF, LFSQ…PPVF, TQAV…TQSF, TQSF…SPVF, VGLP…MPVF, DKPF…PPVF, DQPT…PPVF, NQLI…SPAF, SQST…APQF, MTVE…LPSF, TQSQ…KPVF, ETST…APVF, AHEV…SPVC, DQVA…PPVF, SSNH…PPVF, ERRD…PPRF, SQDV…SPVF, TPAN…KPTA, and IPLE…PEDF. Asparagine 48 carries N-linked (GlcNAc...) asparagine glycosylation. The N-linked (GlcNAc...) asparagine glycan is linked to asparagine 341. Asparagine 481, asparagine 562, asparagine 667, asparagine 799, asparagine 879, asparagine 898, and asparagine 1006 each carry an N-linked (GlcNAc...) asparagine glycan. Residues asparagine 1367 and asparagine 1429 are each glycosylated (N-linked (GlcNAc...) asparagine). Asparagine 1751 carries an N-linked (GlcNAc...) asparagine glycan. Asparagine 1944, asparagine 1993, and asparagine 1996 each carry an N-linked (GlcNAc...) asparagine glycan. N-linked (GlcNAc...) asparagine glycosylation is found at asparagine 2208, asparagine 2292, asparagine 2331, and asparagine 2467. A glycan (N-linked (GlcNAc...) asparagine) is linked at asparagine 2734. N-linked (GlcNAc...) asparagine glycosylation occurs at asparagine 3000. The N-linked (GlcNAc...) asparagine glycan is linked to asparagine 3201. N-linked (GlcNAc...) asparagine glycans are attached at residues asparagine 3449, asparagine 3618, and asparagine 3741. The 39-residue stretch at 3794–3832 folds into the EGF-like 1 domain; it reads SNDPCVEKPCPEDMQCVGYEASRRPFLCQCPPGKLGECS. Cystine bridges form between cysteine 3798–cysteine 3809, cysteine 3803–cysteine 3821, and cysteine 3823–cysteine 3831. One can recognise a Laminin G-like domain in the interval 3834-4017; it reads HTSLSFAGNS…VGLTELKLGC (184 aa). N-linked (GlcNAc...) asparagine glycosylation occurs at asparagine 3926. Cystine bridges form between cysteine 3984/cysteine 4017, cysteine 4024/cysteine 4035, cysteine 4029/cysteine 4045, cysteine 4047/cysteine 4056, cysteine 4063/cysteine 4074, cysteine 4068/cysteine 4083, cysteine 4085/cysteine 4094, cysteine 4101/cysteine 4112, cysteine 4106/cysteine 4121, and cysteine 4123/cysteine 4132. 2 EGF-like domains span residues 4020–4057 and 4059–4095; these read YPDACQRSPCLHGGSCSSLPSGGYQCSCLSQFTGTNCE and EITACFPNPCRNGGSCDPIGNTFVCSCKAGLTGVTCE. One can recognise an EGF-like 4; calcium-binding domain in the interval 4097-4133; sequence DVDECEREECENGGSCVNLFGSFFCNCTPGYVGQYCG. A helical transmembrane segment spans residues 4154 to 4174; sequence LIGIAVVLFVIFTLIVLFIVF. The Cytoplasmic portion of the chain corresponds to 4175 to 4555; sequence RKKVFRKNYS…FVETQQQTQV (381 aa). Disordered stretches follow at residues 4300-4353 and 4395-4474; these read IRKN…YHWD and GGYD…LGGP. The segment covering 4322-4343 has biased composition (polar residues); the sequence is CFTNSNKGSNSEVQSLSSFQSD. Omega-N-methylarginine occurs at positions 4508 and 4518.

As to expression, restricted to the nervous system, mainly in brain. In brain, it is highly expressed in the olfactory bulb and retina. In the developing olfactory bulb, it localizes along the dendrites of these cells as well as in their axons to some extent. In retina, it cocentrates in the inner plexiform layer throughout development (at protein level).

It localises to the membrane. Functionally, may play a role in the interactions between neurites derived from specific subsets of neurons during development. This chain is Protocadherin Fat 3 (Fat3), found in Mus musculus (Mouse).